A 765-amino-acid chain; its full sequence is 1,4-alpha-glucan branching enzyme GlgB (765 aa).

The active-site Nucleophile is D431. E484 acts as the Proton donor in catalysis.

This sequence belongs to the glycosyl hydrolase 13 family. GlgB subfamily. Monomer.

The enzyme catalyses Transfers a segment of a (1-&gt;4)-alpha-D-glucan chain to a primary hydroxy group in a similar glucan chain.. It participates in glycan biosynthesis; glycogen biosynthesis. Catalyzes the formation of the alpha-1,6-glucosidic linkages in glycogen by scission of a 1,4-alpha-linked oligosaccharide from growing alpha-1,4-glucan chains and the subsequent attachment of the oligosaccharide to the alpha-1,6 position. The protein is 1,4-alpha-glucan branching enzyme GlgB of Synechococcus sp. (strain CC9311).